The chain runs to 122 residues: Small ribosomal subunit protein uS13 (122 aa).

The interval 95-122 is disordered; it reads SLPVRGQRTHTNARTRKGPAKSIAGKKK.

Belongs to the universal ribosomal protein uS13 family. Part of the 30S ribosomal subunit. Forms a loose heterodimer with protein S19. Forms two bridges to the 50S subunit in the 70S ribosome.

Functionally, located at the top of the head of the 30S subunit, it contacts several helices of the 16S rRNA. In the 70S ribosome it contacts the 23S rRNA (bridge B1a) and protein L5 of the 50S subunit (bridge B1b), connecting the 2 subunits; these bridges are implicated in subunit movement. Contacts the tRNAs in the A and P-sites. The protein is Small ribosomal subunit protein uS13 of Mesorhizobium japonicum (strain LMG 29417 / CECT 9101 / MAFF 303099) (Mesorhizobium loti (strain MAFF 303099)).